Reading from the N-terminus, the 495-residue chain is uncharacterized protein (495 aa).

Positions serine 16–glutamate 74 constitute a TRAM domain. 4 residues coordinate [4Fe-4S] cluster: cysteine 88, cysteine 94, cysteine 97, and cysteine 175. Residues glutamine 299, tyrosine 328, glutamate 349, and asparagine 397 each contribute to the S-adenosyl-L-methionine site. Cysteine 424 serves as the catalytic Nucleophile. Over residues aspartate 472–arginine 483 the composition is skewed to basic and acidic residues. Positions aspartate 472–valine 495 are disordered. Over residues proline 484–valine 495 the composition is skewed to basic residues.

It belongs to the class I-like SAM-binding methyltransferase superfamily. RNA M5U methyltransferase family.

This is an uncharacterized protein from Geobacter sulfurreducens (strain ATCC 51573 / DSM 12127 / PCA).